A 138-amino-acid chain; its full sequence is Putative pre-16S rRNA nuclease (138 aa).

Belongs to the YqgF nuclease family.

The protein resides in the cytoplasm. Its function is as follows. Could be a nuclease involved in processing of the 5'-end of pre-16S rRNA. This is Putative pre-16S rRNA nuclease from Listeria innocua serovar 6a (strain ATCC BAA-680 / CLIP 11262).